A 104-amino-acid polypeptide reads, in one-letter code: Flagellar hook-basal body complex protein FliE (104 aa).

It belongs to the FliE family.

Its subcellular location is the bacterial flagellum basal body. The polypeptide is Flagellar hook-basal body complex protein FliE (Escherichia coli (strain 55989 / EAEC)).